Consider the following 346-residue polypeptide: E3 ubiquitin-protein ligase MARCHF9 (346 aa).

2 disordered regions span residues 20-39 and 47-92; these read GGGR…GGCG and STRD…PGAL. The segment covering 63–75 has biased composition (basic and acidic residues); the sequence is PRARGLAGDKEPR. Residues 77-90 are compositionally biased toward pro residues; that stretch reads GPLPPPAPPLPPPG. The segment at 102-162 adopts an RING-CH-type zinc-finger fold; that stretch reads DSGLRTPQCR…ELCYFKYQVL (61 aa). 8 residues coordinate Zn(2+): Cys-110, Cys-113, Cys-126, Cys-128, His-136, Cys-139, Cys-152, and Cys-155. 2 consecutive transmembrane segments (helical) span residues 185–205 and 219–239; these read IAAI…LIWS and LFQI…GLII. Disordered stretches follow at residues 273 to 301 and 326 to 346; these read DAGG…RPPA and PPDA…VTTV. The span at 284 to 296 shows a compositional bias: polar residues; it reads PRNSRTGPTSGAT.

In terms of assembly, homodimer. In terms of tissue distribution, ubiquitously expressed.

The protein resides in the golgi apparatus membrane. It localises to the lysosome membrane. The catalysed reaction is S-ubiquitinyl-[E2 ubiquitin-conjugating enzyme]-L-cysteine + [acceptor protein]-L-lysine = [E2 ubiquitin-conjugating enzyme]-L-cysteine + N(6)-ubiquitinyl-[acceptor protein]-L-lysine.. The protein operates within protein modification; protein ubiquitination. E3 ubiquitin-protein ligase that may mediate ubiquitination of MHC-I, CD4 and ICAM1, and promote their subsequent endocytosis and sorting to lysosomes via multivesicular bodies. E3 ubiquitin ligases accept ubiquitin from an E2 ubiquitin-conjugating enzyme in the form of a thioester and then directly transfer the ubiquitin to targeted substrates. The protein is E3 ubiquitin-protein ligase MARCHF9 of Homo sapiens (Human).